The primary structure comprises 146 residues: Large ribosomal subunit protein uL15 (146 aa).

A compositionally biased stretch (basic and acidic residues) spans Met1–Arg13. Positions Met1–Arg59 are disordered. Gly residues-rich tracts occupy residues Thr23–Gln35 and Ser42–Gly52.

It belongs to the universal ribosomal protein uL15 family. In terms of assembly, part of the 50S ribosomal subunit.

Binds to the 23S rRNA. The chain is Large ribosomal subunit protein uL15 from Streptococcus agalactiae serotype Ia (strain ATCC 27591 / A909 / CDC SS700).